A 560-amino-acid chain; its full sequence is Leucine-rich repeat and IQ domain-containing protein 4 (560 aa).

The segment at 1 to 20 is disordered; that stretch reads MSKDIKSVEHSPKIHQRNDP. 20 LRR repeats span residues 23-47, 48-70, 72-95, 97-116, 117-140, 141-164, 166-187, 188-210, 212-233, 234-256, 258-281, 283-301, 302-325, 326-348, 350-371, 374-397, 398-422, 424-443, 444-466, and 468-489; these read VNDR…IFTF, TELE…IQRL, NIRV…LLSS, ESLD…VVSF, LHAL…IFKN, LHHL…IVNQ, KLRE…LCVL, YTLE…IGHL, GLQK…LCQC, SQLS…FAEL, KMTE…RWTS, HLLY…SFRC, LVNL…ICAL, KNLE…LGSL, KLKI…VLSL, LEKL…IRKL, QSLK…SMPN, EVLD…ICQA, QALK…LDSL, and NLKV…VCAE. Residues 504-533 form the IQ domain; the sequence is RNIMATKIQAWWRGTMVQRGFGKFGELLKP. Residues 529–560 form a disordered region; the sequence is ELLKPQKKGKTSPKDKKGKKDVKGKPGKGKKK. Residues 533–560 show a composition bias toward basic residues; sequence PQKKGKTSPKDKKGKKDVKGKPGKGKKK.

This Homo sapiens (Human) protein is Leucine-rich repeat and IQ domain-containing protein 4 (LRRIQ4).